Reading from the N-terminus, the 359-residue chain is Guanine nucleotide-binding protein G(q) subunit alpha (359 aa).

2 S-palmitoyl cysteine lipidation sites follow: cysteine 9 and cysteine 10. In terms of domain architecture, G-alpha spans 38–359 (RELKLLLLGT…QLNLKEYNLV (322 aa)). Positions 41–54 (KLLLLGTGESGKST) are G1 motif. Serine 50, glycine 51, lysine 52, serine 53, threonine 54, serine 156, leucine 180, arginine 181, and arginine 183 together coordinate GTP. Mg(2+) is bound at residue serine 53. Residues 178–186 (DVLRVRVPT) form a G2 motif region. Threonine 186 lines the Mg(2+) pocket. The G3 motif stretch occupies residues 201–210 (FRMVDVGGQR). Glutamine 209 is subject to 5-glutamyl histamine. Residues 270-277 (ILFLNKKD) are G4 motif. Residues asparagine 274, lysine 275, aspartate 277, and alanine 331 each coordinate GTP. The tract at residues 329–334 (TCATDT) is G5 motif.

It belongs to the G-alpha family. G(q) subfamily. As to quaternary structure, g proteins are composed of 3 units; alpha, beta and gamma. The alpha chain contains the guanine nucleotide binding site. Interacts (GDP-bound form) with RIC8A (via C-terminus); promoting GNAQ folding and association with the plasma membrane. Binds NHERF1. Forms a complex with PECAM1 and BDKRB2. Interacts with GAS2L2. Post-translationally, palmitoylated by ZDHHC3 and ZDHHC7. Palmitoylation occurs in the Golgi and participates in the localization of GNAQ to the plasma membrane. Histaminylated at Gln-209 residues by TGM2.

Its subcellular location is the cell membrane. The protein resides in the golgi apparatus. The protein localises to the nucleus. It localises to the nucleus membrane. The catalysed reaction is GTP + H2O = GDP + phosphate + H(+). In terms of biological role, guanine nucleotide-binding proteins (G proteins) function as transducers downstream of G protein-coupled receptors (GPCRs) in numerous signaling cascades. The alpha chain contains the guanine nucleotide binding site and alternates between an active, GTP-bound state and an inactive, GDP-bound state. Signaling by an activated GPCR promotes GDP release and GTP binding. The alpha subunit has a low GTPase activity that converts bound GTP to GDP, thereby terminating the signal. Both GDP release and GTP hydrolysis are modulated by numerous regulatory proteins. Signaling is mediated via phospholipase C-beta-dependent inositol lipid hydrolysis for signal propagation: activates phospholipase C-beta: following GPCR activation, GNAQ activates PLC-beta (PLCB1, PLCB2, PLCB3 or PLCB4), leading to production of diacylglycerol (DAG) and inositol 1,4,5-trisphosphate (IP3). Required for platelet activation. Regulates B-cell selection and survival and is required to prevent B-cell-dependent autoimmunity. Regulates chemotaxis of BM-derived neutrophils and dendritic cells (in vitro). Transduces FFAR4 signaling in response to long-chain fatty acids (LCFAs). Together with GNA11, required for heart development. The sequence is that of Guanine nucleotide-binding protein G(q) subunit alpha (Gnaq) from Rattus norvegicus (Rat).